We begin with the raw amino-acid sequence, 51 residues long: Large ribosomal subunit protein bL33 (51 aa).

The segment at 1–20 is disordered; the sequence is MRDKIRLNSSAGTGHFYTTD.

The protein belongs to the bacterial ribosomal protein bL33 family.

In Psychromonas ingrahamii (strain DSM 17664 / CCUG 51855 / 37), this protein is Large ribosomal subunit protein bL33.